The following is a 543-amino-acid chain: CTP synthase (543 aa).

The interval 1–265 (MARYIFITGG…DDEVLAAFAI (265 aa)) is amidoligase domain. Serine 13 is a binding site for CTP. Serine 13 contacts UTP. 14 to 19 (SLGKGL) serves as a coordination point for ATP. Tyrosine 54 lines the L-glutamine pocket. Aspartate 71 contributes to the ATP binding site. Mg(2+)-binding residues include aspartate 71 and glutamate 139. Residues 146–148 (DIE), 186–191 (KTKPTQ), and lysine 222 each bind CTP. Residues 186-191 (KTKPTQ) and lysine 222 contribute to the UTP site. Residue 238–240 (RDA) coordinates ATP. Positions 291 to 542 (TIAIVGKYTG…IEAALVRSRL (252 aa)) constitute a Glutamine amidotransferase type-1 domain. Glycine 353 contributes to the L-glutamine binding site. The active-site Nucleophile; for glutamine hydrolysis is the cysteine 380. Residues 381–384 (FGMQ), glutamate 404, and arginine 470 contribute to the L-glutamine site. Active-site residues include histidine 515 and glutamate 517.

It belongs to the CTP synthase family. In terms of assembly, homotetramer.

It carries out the reaction UTP + L-glutamine + ATP + H2O = CTP + L-glutamate + ADP + phosphate + 2 H(+). The catalysed reaction is L-glutamine + H2O = L-glutamate + NH4(+). It catalyses the reaction UTP + NH4(+) + ATP = CTP + ADP + phosphate + 2 H(+). It functions in the pathway pyrimidine metabolism; CTP biosynthesis via de novo pathway; CTP from UDP: step 2/2. Its activity is regulated as follows. Allosterically activated by GTP, when glutamine is the substrate; GTP has no effect on the reaction when ammonia is the substrate. The allosteric effector GTP functions by stabilizing the protein conformation that binds the tetrahedral intermediate(s) formed during glutamine hydrolysis. Inhibited by the product CTP, via allosteric rather than competitive inhibition. Functionally, catalyzes the ATP-dependent amination of UTP to CTP with either L-glutamine or ammonia as the source of nitrogen. Regulates intracellular CTP levels through interactions with the four ribonucleotide triphosphates. This is CTP synthase from Rhodopseudomonas palustris (strain HaA2).